Here is a 172-residue protein sequence, read N- to C-terminus: Cyclin-L1 (172 aa).

The segment at 1–36 (MASGPHSTATAAAAASSAAPSAGGSSSGTTTTTTTT) is disordered. Positions 88 to 168 (ELIQAAGILL…LRGKSDQLHL (81 aa)) are cyclin-like.

It belongs to the cyclin family. Cyclin L subfamily. In terms of assembly, interacts with POLR2A via its hyperphosphorylated C-terminal domain (CTD). Interacts with CDK11A, CDK11B, CDK12 and CDK13. May form a ternary complex with CDK11B and casein kinase II (CKII). Interacts with pre-mRNA-splicing factors, including at least SRSF1, SRSF2 and SRSF7/SLU7.

Its subcellular location is the nucleus speckle. The protein localises to the nucleus. The protein resides in the nucleoplasm. Involved in pre-mRNA splicing. Functions in association with cyclin-dependent kinases (CDKs). May play a role in the regulation of RNA polymerase II (pol II). Inhibited by the CDK-specific inhibitor CDKN1A/p21. The protein is Cyclin-L1 (CCNL1) of Pongo abelii (Sumatran orangutan).